Here is a 365-residue protein sequence, read N- to C-terminus: MDTEFAILDEEKYYDSVFKELNLKTRSELYEISSKFMPDSQFEAIKRRGISNRKRKIKETSENSNRMEQMALKIKNVGTELKIFKKKSILDNNLKSRKAAETALNVSIPSASASSEQIIEFQKSESLSNLMSNGMINNWVRCSGDKPGIIENSDGTKFYIPPKSTFHVGDVKDIEQYSRAHDLLFDLIIADPPWFSKSVKRKRTYQMDEEVLDCLDIPVILTHDALIAFWITNRIGIEEEMIERFDKWGMEVVATWKLLKITTQGDPVYDFDNQKHKVPFESLMLAKKKDSMRKFELPENFVFASVPMSVHSHKPPLLDLLRHFGIEFTEPLELFARSLLPSTHSVGYEPFLLQSEHVFTRNISL.

This sequence belongs to the MT-A70-like family.

The catalysed reaction is a 2'-deoxyadenosine in DNA + S-adenosyl-L-methionine = an N(6)-methyl-2'-deoxyadenosine in DNA + S-adenosyl-L-homocysteine + H(+). Methylates DNA on the 6th position of adenine (N(6)-methyladenosine). N(6)-methyladenosine (m6A) DNA is involved in epigenetic transgenerational inheritance. This is DNA N6-methyl methyltransferase from Caenorhabditis elegans.